Here is a 221-residue protein sequence, read N- to C-terminus: Iron-sulfur cluster repair protein YtfE (221 aa).

This sequence belongs to the RIC family. YtfE subfamily. As to quaternary structure, homodimer.

The protein localises to the cytoplasm. Its function is as follows. Di-iron-containing protein involved in the repair of iron-sulfur clusters damaged by oxidative and nitrosative stress conditions. In Yersinia pseudotuberculosis serotype IB (strain PB1/+), this protein is Iron-sulfur cluster repair protein YtfE.